A 247-amino-acid chain; its full sequence is Complement C1q subcomponent subunit B (247 aa).

The first 22 residues, 1–22 (MKTPRGSVLVLLLLNLLRVSWA), serve as a signal peptide directing secretion. Q23 is modified (pyrrolidone carboxylic acid). P29, P32, P35, P47, and P50 each carry 4-hydroxyproline. A disordered region spans residues 30–78 (SIPGIPGIPGKPGSDGKPGTPGTKGEKGLPGLVSHLNENGEKGDPGFPG). Residues 39 to 98 (GKPGSDGKPGTPGTKGEKGLPGLVSHLNENGEKGDPGFPGMPGKVGPKGPIGPKGVPGPP) form the Collagen-like domain. Residues 40-52 (KPGSDGKPGTPGT) are compositionally biased toward low complexity. 2 positions are modified to 5-hydroxylysine: K53 and K56. The residue at position 59 (P59) is a 4-hydroxyproline. Residue K71 is modified to 5-hydroxylysine. 4-hydroxyproline is present on residues P77 and P80. Residues K86 and K92 each carry the 5-hydroxylysine modification. Residues P95 and P98 each carry the 4-hydroxyproline modification. K104 carries the post-translational modification 5-hydroxylysine. Positions 111–247 (KATQKIAFSA…GFMLFPDTEA (137 aa)) constitute a C1q domain. C175 and C192 are joined by a disulfide. Positions 193, 194, and 200 each coordinate Ca(2+).

Core component of the complement C1 complex, a calcium-dependent complex composed of 1 molecule of the C1Q subcomplex, 2 molecules of C1R and 2 molecules of C1S. The C1Q subcomplex is composed 18 subunits: 3 chains of C1QA, C1QB, and C1QC trimerize to form 6 collagen-like triple helices connected to six globular ligand-recognition modules (C1q domain). In terms of processing, hydroxylated on lysine and proline residues. Hydroxylated lysine residues can be glycosylated. Bovine C1Q contains up to 66.3 hydroxylysine-galactosylglucose residues. Total percentage hydroxylysine residues glycosylated is 92.0%. Contains no hydroxylysine-monosaccharides.

It localises to the secreted. It is found in the cell surface. Its activity is regulated as follows. The C1Q subcomplex is inhibited by sulfated molecules, such as triterpenoid sulfates, heparan sulfate, or chondroitin sulfates. Its function is as follows. Core component of the complement C1 complex, a multiprotein complex that initiates the classical pathway of the complement system, a cascade of proteins that leads to phagocytosis and breakdown of pathogens and signaling that strengthens the adaptive immune system. The classical complement pathway is initiated by the C1Q subcomplex of the C1 complex, which specifically binds IgG or IgM immunoglobulins complexed with antigens, forming antigen-antibody complexes on the surface of pathogens: C1QA, together with C1QB and C1QC, specifically recognizes and binds the Fc regions of IgG or IgM via its C1q domain. Immunoglobulin-binding activates the proenzyme C1R, which cleaves C1S, initiating the proteolytic cascade of the complement system. The C1Q subcomplex is activated by a hexamer of IgG complexed with antigens, while it is activated by a pentameric IgM. The C1Q subcomplex also recognizes and binds phosphatidylserine exposed on the surface of cells undergoing programmed cell death, possibly promoting activation of the complement system. The chain is Complement C1q subcomponent subunit B (C1QB) from Bos taurus (Bovine).